The primary structure comprises 433 residues: MLDIQLLRKDLDGVAKRLADRGYTLDVAAFSALEAERRAIQTRTEELQARRNSLSKQIGAMKGKGEDTSAVMAEVGGIGDEMKASEVKLGEIQSRLSDLMLGMPNIAHESVPVGKDEADNVELRRWGTPRQFDFDVKDHVDVGTPLGLDFETGAKLAGARFTMLRGPIARLHRALAQFMLDTHTQLHGYSETYTPYIVNPEILYGTGQLPKFADDMFRVEKGGAENTITQYLISTSEISLTNTVRESIVDASALPIKLTAHSPCFRSEAGSYGRDTRGMIRQHQFDKVEMVQVVAPDTSYAALDEMVGHAEAILQKLGLPYRVITLCTGDMGFSAAKTFDLEVWLPAQNTYREISSCSNTEAFQARRMQARFRNAQGKPELVHTLNGSGLAVGRTLVAVLENYQNADGSVTVPEVLRPYMGGMERIDAPVQAS.

Position 235 to 237 (235 to 237 (TSE)) interacts with L-serine. 266–268 (RSE) lines the ATP pocket. Residue glutamate 289 coordinates L-serine. 353-356 (EISS) contributes to the ATP binding site. Serine 388 provides a ligand contact to L-serine.

It belongs to the class-II aminoacyl-tRNA synthetase family. Type-1 seryl-tRNA synthetase subfamily. As to quaternary structure, homodimer. The tRNA molecule binds across the dimer.

The protein resides in the cytoplasm. The enzyme catalyses tRNA(Ser) + L-serine + ATP = L-seryl-tRNA(Ser) + AMP + diphosphate + H(+). It carries out the reaction tRNA(Sec) + L-serine + ATP = L-seryl-tRNA(Sec) + AMP + diphosphate + H(+). It participates in aminoacyl-tRNA biosynthesis; selenocysteinyl-tRNA(Sec) biosynthesis; L-seryl-tRNA(Sec) from L-serine and tRNA(Sec): step 1/1. Its function is as follows. Catalyzes the attachment of serine to tRNA(Ser). Is also able to aminoacylate tRNA(Sec) with serine, to form the misacylated tRNA L-seryl-tRNA(Sec), which will be further converted into selenocysteinyl-tRNA(Sec). In Burkholderia vietnamiensis (strain G4 / LMG 22486) (Burkholderia cepacia (strain R1808)), this protein is Serine--tRNA ligase.